Here is a 313-residue protein sequence, read N- to C-terminus: Olfactory receptor 4M1 (313 aa).

At 1–25 the chain is on the extracellular side; the sequence is MEPANDTTVTEFILTGLSQTREVQL. Asparagine 5 is a glycosylation site (N-linked (GlcNAc...) asparagine). Residues 26–46 traverse the membrane as a helical segment; that stretch reads VLFVIFLSFYLFILPVNILII. Residues 47 to 57 are Cytoplasmic-facing; that stretch reads CTIRLDSHLSS. The helical transmembrane segment at 58–78 threads the bilayer; it reads PMYFLLANLAFLDIWYSSITA. Topologically, residues 79–97 are extracellular; sequence PKMLVDFFVERKIISFGGC. Cysteines 97 and 179 form a disulfide. A helical transmembrane segment spans residues 98–118; that stretch reads IAQLFFLHFVGASEMFLLTVM. Residues 119–142 are Cytoplasmic-facing; that stretch reads AFDRYAAICRPLHYATIMNRRLCC. A helical transmembrane segment spans residues 143 to 163; that stretch reads ILVALSWTGGFVHSIIQVALI. Residues 164–204 are Extracellular-facing; the sequence is VRLPFCGPNELDNYFCDITQVVRIACANTFLEEMVMIFSSG. The chain crosses the membrane as a helical span at residues 205-225; sequence LISVVCFIALLMSYAFLLTML. Topologically, residues 226–238 are cytoplasmic; sequence KKHSSSGESTSRA. The chain crosses the membrane as a helical span at residues 239–259; it reads ISTCYSHITIVVLMFGPSIYI. Over 260 to 270 the chain is Extracellular; the sequence is YARPFDSFSLD. Residues 271 to 291 form a helical membrane-spanning segment; that stretch reads KVVSVFHTVIFPLLNPIIYTL. Residues 292 to 313 are Cytoplasmic-facing; it reads RNKEVKAAMRKLVNRYIFCKEK.

It belongs to the G-protein coupled receptor 1 family. Highly expressed in liver but not in adipose tissue. Also expressed at high level in testis.

The protein localises to the cell membrane. Its function is as follows. Olfactory receptor that acts as a receptor of Asprosin hormone at the surface of hepatocytes to promote hepatocyte glucose release. Also binds Asprosin in the arcuate nucleus of the hypothalamus, thereby stimulating appetite by promoting orexigenic AgRP neuronal activity. In testis, Asprosin-binding promotes sperm progressive motility and enhances male fertility. The activity of this receptor is mediated by G proteins which activate adenylyl cyclase, resulting in an elevation of intracellular cAMP. The polypeptide is Olfactory receptor 4M1 (Mus musculus (Mouse)).